The chain runs to 428 residues: UPF0229 protein YeaH (428 aa).

Residues 78-90 (GNDHFIQNDRIER) are compositionally biased toward basic and acidic residues. The interval 78–111 (GNDHFIQNDRIERPQGGGGGGSGSGQGQASQDGE) is disordered. The span at 92-103 (QGGGGGGSGSGQ) shows a compositional bias: gly residues.

This sequence belongs to the UPF0229 family.

The chain is UPF0229 protein YeaH from Salmonella choleraesuis (strain SC-B67).